We begin with the raw amino-acid sequence, 537 residues long: uncharacterized protein (537 aa).

This is an uncharacterized protein from Methanocaldococcus jannaschii (strain ATCC 43067 / DSM 2661 / JAL-1 / JCM 10045 / NBRC 100440) (Methanococcus jannaschii).